The following is a 115-amino-acid chain: Con-Ins T1A (115 aa).

The signal sequence occupies residues M1–G24. Residues N25–R29 constitute a propeptide that is removed on maturation. 4-hydroxyproline; partial is present on P34. Disulfide bonds link C38–C101, C50–C114, and C100–C105. E41 is subject to 4-carboxyglutamate. A propeptide spans K53 to R94 (c peptide). Position 98 is a 4-carboxyglutamate (E98). P104 is modified (4-hydroxyproline; partial). Position 109 is a 4-carboxyglutamate; partial (E109). C114 is subject to Cysteine amide.

Belongs to the insulin family. In terms of assembly, heterodimer of A and B chains; disulfide-linked. In terms of tissue distribution, expressed by the venom gland.

It is found in the secreted. Functionally, this venom insulin, from a fish-hunting cone snail, facilitates prey capture by rapidly inducing hypoglycemic shock. It is one of the smallest known insulin found in nature and lacks the C-terminal segment of the B chain that, in human insulin, mediates engagement of the insulin receptor (INSR) and assembly of the hormone's hexameric storage form. Despite lacking this segment, it both binds and activates human insulin receptor (long isoform (HIR-B)) with a high potency (EC(50)=12.0 nM). In vivo, intraperitoneal injection of this peptide into zebrafish lowers blood glucose with a lower potency than human insulin. In addition, when applied to water, this peptide reduces overall locomotor activity of zebrafish larvae, observed as a significant decrease in the percentage of time spent swimming and movement frequency. When tested on a mouse model of diabetes, this insulin also lowers blood glucose with a 10-fold lower potency than human insulin. The polypeptide is Con-Ins T1A (Conus tulipa (Fish-hunting cone snail)).